The following is a 1083-amino-acid chain: Solute carrier family 12 member 7 (1083 aa).

The tract at residues 1–55 is disordered; the sequence is MPTNFTVVPVEARADGAGDEAAERTEEPESPESVDQTSPTPGDGNPRENSPFINN. Over 1 to 119 the chain is Cytoplasmic; sequence MPTNFTVVPV…RREVKAPRMG (119 aa). The span at 12–27 shows a compositional bias: basic and acidic residues; the sequence is ARADGAGDEAAERTEE. 2 positions are modified to phosphoserine: Ser-30 and Ser-33. Position 37 is a phosphothreonine (Thr-37). 2 positions are modified to phosphoserine: Ser-50 and Ser-62. The discontinuously helical transmembrane segment at 120–142 threads the bilayer; sequence TFIGVYLPCLQNILGVILFLRLT. Asn-131 and Ile-132 together coordinate K(+). Val-135 serves as a coordination point for chloride. Over 143 to 149 the chain is Extracellular; that stretch reads WIVGAAG. Residues 150–172 traverse the membrane as a helical segment; that stretch reads VMESFLIVAMCCTCTMLTAISMS. Over 173–196 the chain is Cytoplasmic; that stretch reads AIATNGVVPAGGSYYMISRSLGPE. Residues 197-225 form a helical membrane-spanning segment; it reads FGGAVGLCFYLGTTFAGAMYILGTIEIFL. Topologically, residues 226–249 are extracellular; sequence TYISPSAAIFQAETADGEAAALLN. 2 helical membrane passes run 250–271 and 272–300; these read NMRVYGSCALALMAVVVFVGVK and YVNKLALVFLACVVLSILAIYAGVIKTAF. Residues 301–419 lie on the Extracellular side of the membrane; sequence APPDIPVCLL…PYVLTDIMTY (119 aa). Residue Asn-312 is glycosylated (N-linked (GlcNAc...) (high mannose) asparagine). 2 N-linked (GlcNAc...) (complex) asparagine glycosylation sites follow: Asn-331 and Asn-344. An N-linked (GlcNAc...) (high mannose) asparagine glycan is attached at Asn-360. The helical transmembrane segment at 420–440 threads the bilayer; the sequence is FTMLVGIYFPSVTGIMAGSNR. Residues Pro-429 and Thr-432 each contribute to the K(+) site. Pro-429 serves as a coordination point for chloride. Residues Gly-433 and Ile-434 each contribute to the chloride site. The Cytoplasmic segment spans residues 441–450; sequence SGDLKDAQKS. A helical transmembrane segment spans residues 451-473; sequence IPTGTILAIVTTSFIYLSCIVLF. The Extracellular portion of the chain corresponds to 474-504; the sequence is GACIEGVVLRDKFGEALQGNLVIGMLAWPSP. A helical membrane pass occupies residues 505–531; the sequence is WVIVIGSFFSTCGAGLQSLTGAPRLLQ. Residues 532 to 554 are Cytoplasmic-facing; it reads AIARDGIIPFLQVFGHGKANGEP. 2 consecutive transmembrane segments (helical) span residues 555 to 573 and 574 to 598; these read TWALLLTALICETGILIAS and LDSVAPILSMFFLMCYMFVNLACAV. Tyr-589 serves as a coordination point for chloride. The Cytoplasmic segment spans residues 599–612; that stretch reads QTLLRTPNWRPRFK. Helical transmembrane passes span 613-635 and 636-651; these read FYHWTLSFLGMSLCLALMFICSW and YYALFAMLIAGCIYKY. Over 652–1083 the chain is Cytoplasmic; it reads IEYRGAEKEW…GGREVITIYS (432 aa). Positions 664-680 are scissor helix; that stretch reads GIRGLSLNAARYALLRV. Phosphothreonine occurs at positions 973 and 980.

It belongs to the SLC12A transporter family. K/Cl co-transporter subfamily. As to quaternary structure, homodimer; adopts a domain-swap conformation at the scissor helices connecting the transmembrane domain and C-terminal domain. Heterodimer with K-Cl cotransporter SLC12A5. In terms of processing, glycosylation at Asn-331 and Asn-344 is required for proper trafficking to the cell surface, and augments protein stability. In terms of tissue distribution, detected in proximal tubules in the kidney, in particular in basolateral membranes of intercalated cells in the cortical collecting duct.

The protein localises to the cell membrane. The catalysed reaction is K(+)(in) + chloride(in) = K(+)(out) + chloride(out). Its activity is regulated as follows. Activated by N-ethylmaleimide (NEM). Inhibited by furosemide, DIDS and bumetanide. The inhibition is much stronger in the presence of 50 mM K(+) in the uptake medium. Inhibited by DIOA. Inhibited by WNK3. Functionally, mediates electroneutral potassium-chloride cotransport when activated by cell swelling. May mediate K(+) uptake into Deiters' cells in the cochlea and contribute to K(+) recycling in the inner ear. Important for the survival of cochlear outer and inner hair cells and the maintenance of the organ of Corti. May be required for basolateral Cl(-) extrusion in the kidney and contribute to renal acidification. The polypeptide is Solute carrier family 12 member 7 (Slc12a7) (Mus musculus (Mouse)).